The following is a 212-amino-acid chain: Probable GTP-binding protein EngB (212 aa).

The EngB-type G domain occupies 22-212; the sequence is GVSEFAFFGR…NILSLIAKRI (191 aa). GTP-binding positions include 30–37, 57–61, 95–98, 162–165, and 192–195; these read GRSNAGKS, GMTRE, DLPG, TKAD, and ISSA. Residues serine 37 and threonine 59 each coordinate Mg(2+).

The protein belongs to the TRAFAC class TrmE-Era-EngA-EngB-Septin-like GTPase superfamily. EngB GTPase family. Mg(2+) serves as cofactor.

Its function is as follows. Necessary for normal cell division and for the maintenance of normal septation. In Treponema denticola (strain ATCC 35405 / DSM 14222 / CIP 103919 / JCM 8153 / KCTC 15104), this protein is Probable GTP-binding protein EngB.